The sequence spans 396 residues: Tryptophan synthase beta chain (396 aa).

N6-(pyridoxal phosphate)lysine is present on Lys-86.

It belongs to the TrpB family. Tetramer of two alpha and two beta chains. It depends on pyridoxal 5'-phosphate as a cofactor.

The catalysed reaction is (1S,2R)-1-C-(indol-3-yl)glycerol 3-phosphate + L-serine = D-glyceraldehyde 3-phosphate + L-tryptophan + H2O. It participates in amino-acid biosynthesis; L-tryptophan biosynthesis; L-tryptophan from chorismate: step 5/5. In terms of biological role, the beta subunit is responsible for the synthesis of L-tryptophan from indole and L-serine. This Francisella tularensis subsp. novicida (strain U112) protein is Tryptophan synthase beta chain.